Reading from the N-terminus, the 430-residue chain is RNA-binding protein 34 (430 aa).

Disordered stretches follow at residues 1–55 (MALE…GTGR), 72–123 (VPVP…ADRE), and 134–153 (EIHQKQGQKRKNSQPGVKVA). Serine 14, serine 28, and serine 99 each carry phosphoserine. Residues 23–34 (DGVRGSPPEDYR) are compositionally biased toward basic and acidic residues. The span at 113 to 123 (TNAEKKLADRE) shows a compositional bias: basic and acidic residues. Lysine 151 carries the post-translational modification N6-acetyllysine. RRM domains are found at residues 185-280 (RTVF…LASE) and 287-364 (RSVF…RSVN). Lysine 242 participates in a covalent cross-link: Glycyl lysine isopeptide (Lys-Gly) (interchain with G-Cter in SUMO2). Serine 288 bears the Phosphoserine mark. Disordered stretches follow at residues 365–395 (KEKFKQQNSNPRLKNVSKPKQGLNFTSKTAE) and 411–430 (KTKKKGQKKSGRPKKQRKQK).

Belongs to the RRM RBM34 family.

The protein localises to the nucleus. It is found in the nucleolus. This chain is RNA-binding protein 34 (RBM34), found in Homo sapiens (Human).